The primary structure comprises 477 residues: Histidine--tRNA ligase (477 aa).

The protein belongs to the class-II aminoacyl-tRNA synthetase family. As to quaternary structure, homodimer.

It localises to the cytoplasm. It catalyses the reaction tRNA(His) + L-histidine + ATP = L-histidyl-tRNA(His) + AMP + diphosphate + H(+). The chain is Histidine--tRNA ligase from Xanthomonas campestris pv. campestris (strain 8004).